Here is a 635-residue protein sequence, read N- to C-terminus: ADP-ribosylation factor-binding protein GGA1 (635 aa).

Met1 is subject to N-acetylmethionine. Residues 17–147 enclose the VHS domain; it reads ATNPLNKELN…MLKKQGIVKS (131 aa). The tract at residues 114-273 is interaction with ARF3; that stretch reads KILELLYSWT…RLASDTEDND (160 aa). Residues 171–298 form the GAT domain; that stretch reads DEEKSKMLAR…VINLYKQLVR (128 aa). Ser185 is subject to Phosphoserine. A unstructured hinge region spans residues 299–505; that stretch reads GEEVNGDATA…ITVPLESIKP (207 aa). The interval 305–349 is disordered; sequence DATASSIPGSTSALLDLSGLDLPPPGTTQPATPTRPGNQSSPEQL. Low complexity predominate over residues 313 to 325; the sequence is GSTSALLDLSGLD. Ser354 carries the post-translational modification Phosphoserine. The Autoinhibitory motif lies at 357–361; that stretch reads DDELM. Disordered regions lie at residues 362–422 and 455–490; these read SLGL…LDDL and RDLQ…TPTE. A compositionally biased stretch (polar residues) spans 383–393; sequence NFQSSDGTESS. Ser417 carries the post-translational modification Phosphoserine. Residues 459–476 are compositionally biased toward low complexity; the sequence is SKSSSPSPGAASLLHTTS. Residues 477–486 show a composition bias toward pro residues; it reads PEPPGPPPQA. One can recognise a GAE domain in the interval 506 to 627; sequence SSILPVTVYD…NEMGDVDQFP (122 aa).

Belongs to the GGA protein family. Monomer. Interacts with GGA2 and GGA3. Binds to clathrin and activated ARFs, including ARF1, ARF5 and ARF6. Interacts with RABEP1 and RABGEF1. Interacts with the type-I membrane proteins LRP3, M6PR/CD-MPR and IGF2R/CI-MPR. Interacts (via N-terminal VHS domain) with SORL1/sorLA and SORT1 (via C-terminal cytosolic domain). Interacts with EPN4. Interacts with CCDC91. Interacts with HEATR5B/p200a. Interacts with SYNRG/gamma-synergin. Interacts (via GAE doamin) with NECAP1 and NECAP2. Interacts (via GAE domain) with AFTPH/aftiphilin. Interacts with TSG101 and UBC. Interacts with RNF11. Interacts (via VHS domain) with BACE1 (via DXXLL motif); the interaction highly increases when BACE1 is phosphorylated at 'Ser-498'. Interacts with CNST. Interacts with ADRA2B. Interacts with ARL3; the interaction recruits, in collaboration with RABEP1, PKD1:PKD2 complex to trans-Golgi network and is required for ciliary targeting. In terms of processing, phosphorylated by CK2 and dephosphorylated by PP2A. Phosphorylation of GGA1 allows the internal DXXLL motif to bind the VHS domain and to inhibit the recognition of cargo signals. Ubiquitinated.

It is found in the golgi apparatus. The protein resides in the trans-Golgi network membrane. Its subcellular location is the endosome membrane. It localises to the early endosome membrane. Its function is as follows. Plays a role in protein sorting and trafficking between the trans-Golgi network (TGN) and endosomes. Mediates the ARF-dependent recruitment of clathrin to the TGN and binds ubiquitinated proteins and membrane cargo molecules with a cytosolic acidic cluster-dileucine (DXXLL) motif. Mediates export of the GPCR receptor ADRA2B to the cell surface. Required for targeting PKD1:PKD2 complex from the trans-Golgi network to the cilium membrane. Regulates retrograde transport of proteins such as phosphorylated form of BACE1 from endosomes to the trans-Golgi network. The protein is ADP-ribosylation factor-binding protein GGA1 (Gga1) of Mus musculus (Mouse).